The following is a 429-amino-acid chain: U3 small nucleolar RNA-associated protein 18 homolog (429 aa).

WD repeat units follow at residues 117 to 156 (RYTR…KKDR), 295 to 336 (TDDG…NSTN), 345 to 386 (NLVT…TFKN), and 392 to 428 (GKVT…HFTD).

This sequence belongs to the WD repeat UTP18 family.

It localises to the nucleus. The protein localises to the nucleolus. Its function is as follows. Involved in nucleolar processing of pre-18S ribosomal RNA. This chain is U3 small nucleolar RNA-associated protein 18 homolog, found in Caenorhabditis elegans.